We begin with the raw amino-acid sequence, 207 residues long: Ribonuclease HII (207 aa).

The RNase H type-2 domain maps to 12–201 (DLVAGVDEVG…VRAAWEAREG (190 aa)). 3 residues coordinate a divalent metal cation: Asp-18, Glu-19, and Asp-110.

This sequence belongs to the RNase HII family. The cofactor is Mn(2+). Mg(2+) is required as a cofactor.

Its subcellular location is the cytoplasm. It catalyses the reaction Endonucleolytic cleavage to 5'-phosphomonoester.. In terms of biological role, endonuclease that specifically degrades the RNA of RNA-DNA hybrids. This chain is Ribonuclease HII, found in Pseudomonas putida (strain ATCC 47054 / DSM 6125 / CFBP 8728 / NCIMB 11950 / KT2440).